A 348-amino-acid chain; its full sequence is Selenide, water dikinase (348 aa).

Cysteine 17 is a catalytic residue. Residues lysine 20 and 48–50 (TRD) each bind ATP. Aspartate 51 is a Mg(2+) binding site. Residues aspartate 68, aspartate 91, and 139-141 (GHS) each bind ATP. A Mg(2+)-binding site is contributed by aspartate 91. Aspartate 227 serves as a coordination point for Mg(2+).

The protein belongs to the selenophosphate synthase 1 family. Class I subfamily. In terms of assembly, homodimer. Requires Mg(2+) as cofactor.

The catalysed reaction is hydrogenselenide + ATP + H2O = selenophosphate + AMP + phosphate + 2 H(+). Its function is as follows. Synthesizes selenophosphate from selenide and ATP. This chain is Selenide, water dikinase, found in Yersinia pestis.